Consider the following 135-residue polypeptide: Holo-[acyl-carrier-protein] synthase (135 aa).

Mg(2+) contacts are provided by D7 and E57.

Belongs to the P-Pant transferase superfamily. AcpS family. Mg(2+) serves as cofactor.

It localises to the cytoplasm. It carries out the reaction apo-[ACP] + CoA = holo-[ACP] + adenosine 3',5'-bisphosphate + H(+). Its function is as follows. Transfers the 4'-phosphopantetheine moiety from coenzyme A to a Ser of acyl-carrier-protein. This is Holo-[acyl-carrier-protein] synthase from Corynebacterium glutamicum (strain R).